We begin with the raw amino-acid sequence, 380 residues long: MASLRKTHPLIKIANDALVDLPTPSNISAWWNFGSLLGLCLITQILTGLFLAMHYTSDISTAFSSVTHICRDVNYGWLIRNIHANGASFFFICIYMHIARGLYYGSYLYKETWNIGVVLLLLVMMTAFVGYVLPWGQMSFWGATVITNLLSAVPYMGDMLVQWIWGGFSVDNATLTRFFAFHFLLPFIIAAATVIHLLFLHETGSNNPIGLNSDADKISFHPYFSYKDLLGFVIMLLALTLLALFSPNLLGDPENFTPANPLVTPPHIKPEWYFLFAYAILRSIPNKLGGVLALLFSILVLMVVPLLHTSKQRGLTFRPITQFLFWTLVADMIILTWIGGMPVEHPFIIIGQIASVLYFALFLVLFPLAGWLENKALKWA.

4 helical membrane-spanning segments follow: residues 33-53 (FGSLLGLCLITQILTGLFLAM), 77-98 (WLIRNIHANGASFFFICIYMHI), 113-133 (WNIGVVLLLLVMMTAFVGYVL), and 178-198 (FFAFHFLLPFIIAAATVIHLL). Positions 83 and 97 each coordinate heme b. The heme b site is built by H182 and H196. Position 201 (H201) interacts with a ubiquinone. 4 helical membrane passes run 226–246 (YKDLLGFVIMLLALTLLALFS), 288–308 (LGGVLALLFSILVLMVVPLLH), 320–340 (ITQFLFWTLVADMIILTWIGG), and 347–367 (FIIIGQIASVLYFALFLVLFP).

Belongs to the cytochrome b family. In terms of assembly, the cytochrome bc1 complex contains 3 respiratory subunits (MT-CYB, CYC1 and UQCRFS1), 2 core proteins (UQCRC1 and UQCRC2) and probably 6 low-molecular weight proteins. Requires heme b as cofactor.

Its subcellular location is the mitochondrion inner membrane. Its function is as follows. Component of the ubiquinol-cytochrome c reductase complex (complex III or cytochrome b-c1 complex) that is part of the mitochondrial respiratory chain. The b-c1 complex mediates electron transfer from ubiquinol to cytochrome c. Contributes to the generation of a proton gradient across the mitochondrial membrane that is then used for ATP synthesis. The sequence is that of Cytochrome b (mt-cyb) from Carassius auratus (Goldfish).